The following is a 100-amino-acid chain: NADH-quinone oxidoreductase subunit K (100 aa).

3 consecutive transmembrane segments (helical) span residues 4–24 (LSHA…AIIV), 29–49 (LFIL…FVIV), and 60–80 (IMYI…LALL).

Belongs to the complex I subunit 4L family. As to quaternary structure, NDH-1 is composed of 13 different subunits. Subunits NuoA, H, J, K, L, M, N constitute the membrane sector of the complex.

It localises to the cell inner membrane. The enzyme catalyses a quinone + NADH + 5 H(+)(in) = a quinol + NAD(+) + 4 H(+)(out). In terms of biological role, NDH-1 shuttles electrons from NADH, via FMN and iron-sulfur (Fe-S) centers, to quinones in the respiratory chain. The immediate electron acceptor for the enzyme in this species is believed to be ubiquinone. Couples the redox reaction to proton translocation (for every two electrons transferred, four hydrogen ions are translocated across the cytoplasmic membrane), and thus conserves the redox energy in a proton gradient. This chain is NADH-quinone oxidoreductase subunit K, found in Blochmanniella pennsylvanica (strain BPEN).